The following is a 273-amino-acid chain: Cytoplasmic phosphatidylinositol transfer protein 1 (273 aa).

A disordered region spans residues 244–273 (QAETNEKIHNTSGGANAAANAKEANDGDID).

The protein belongs to the PtdIns transfer protein family. PI transfer class IIB subfamily.

Functionally, phosphatidylinositol transfer proteins mediate the monomeric transport of lipids by shielding a lipid from the aqueous environment and binding the lipid in a hydrophobic cavity. This is Cytoplasmic phosphatidylinositol transfer protein 1 (rdgBbeta) from Drosophila melanogaster (Fruit fly).